A 120-amino-acid chain; its full sequence is NAD(P)H-quinone oxidoreductase subunit 3, chloroplastic (120 aa).

Helical transmembrane passes span 9–29 (IFWT…WISG), 64–84 (MFAL…PWAM), and 88–108 (VLGV…VVGL).

It belongs to the complex I subunit 3 family. As to quaternary structure, NDH is composed of at least 16 different subunits, 5 of which are encoded in the nucleus.

It is found in the plastid. The protein localises to the chloroplast thylakoid membrane. The enzyme catalyses a plastoquinone + NADH + (n+1) H(+)(in) = a plastoquinol + NAD(+) + n H(+)(out). The catalysed reaction is a plastoquinone + NADPH + (n+1) H(+)(in) = a plastoquinol + NADP(+) + n H(+)(out). In terms of biological role, NDH shuttles electrons from NAD(P)H:plastoquinone, via FMN and iron-sulfur (Fe-S) centers, to quinones in the photosynthetic chain and possibly in a chloroplast respiratory chain. The immediate electron acceptor for the enzyme in this species is believed to be plastoquinone. Couples the redox reaction to proton translocation, and thus conserves the redox energy in a proton gradient. The sequence is that of NAD(P)H-quinone oxidoreductase subunit 3, chloroplastic from Lolium perenne (Perennial ryegrass).